Consider the following 508-residue polypeptide: Lysine--tRNA ligase (508 aa).

Mg(2+) is bound by residues E416 and E423.

This sequence belongs to the class-II aminoacyl-tRNA synthetase family. As to quaternary structure, homodimer. Mg(2+) serves as cofactor.

It localises to the cytoplasm. It catalyses the reaction tRNA(Lys) + L-lysine + ATP = L-lysyl-tRNA(Lys) + AMP + diphosphate. This is Lysine--tRNA ligase from Prochlorococcus marinus (strain MIT 9313).